A 79-amino-acid chain; its full sequence is Cytochrome c oxidase assembly factor 6 homolog (79 aa).

The CHCH domain occupies 9-52; that stretch reads RQACWGARDEYWKCLDENTEDASKCKKLRSSFESSCPQQWIKYF. Residues 12-22 carry the Cx9C motif motif; that stretch reads CWGARDEYWKC. Intrachain disulfides connect Cys-12/Cys-44 and Cys-22/Cys-33. The Cx10C motif signature appears at 33-44; it reads CKKLRSSFESSC.

This sequence belongs to the cytochrome c oxidase subunit 6B family. In terms of assembly, found in a complex with TMEM177, COX20, MT-CO2/COX2, COX18, SCO1 and SCO2. Interacts with COA1, MT-CO2/COX2, SCO1, SCO2 and COX20. Interacts with COX20 in a MT-CO2/COX2- and COX18-dependent manner. Interacts with COX16.

The protein localises to the mitochondrion intermembrane space. Its function is as follows. Involved in the maturation of the mitochondrial respiratory chain complex IV subunit MT-CO2/COX2. Thereby, may regulate early steps of complex IV assembly. Mitochondrial respiratory chain complex IV or cytochrome c oxidase is the component of the respiratory chain that catalyzes the transfer of electrons from intermembrane space cytochrome c to molecular oxygen in the matrix and as a consequence contributes to the proton gradient involved in mitochondrial ATP synthesis. May also be required for efficient formation of respiratory supercomplexes comprised of complexes III and IV. The chain is Cytochrome c oxidase assembly factor 6 homolog (COA6) from Bos taurus (Bovine).